We begin with the raw amino-acid sequence, 419 residues long: Tyrosine--tRNA ligase (419 aa).

An L-tyrosine-binding site is contributed by Y42. The 'HIGH' region signature appears at 47 to 56 (ATAPSLHVGS). Residues Y179 and Q183 each contribute to the L-tyrosine site. A 'KMSKS' region motif is present at residues 239-243 (KMGKT). An ATP-binding site is contributed by K242. The S4 RNA-binding domain maps to 353-418 (IVLANLFADA…GKKKIVLVKP (66 aa)).

It belongs to the class-I aminoacyl-tRNA synthetase family. TyrS type 1 subfamily. As to quaternary structure, homodimer.

Its subcellular location is the cytoplasm. The catalysed reaction is tRNA(Tyr) + L-tyrosine + ATP = L-tyrosyl-tRNA(Tyr) + AMP + diphosphate + H(+). Catalyzes the attachment of tyrosine to tRNA(Tyr) in a two-step reaction: tyrosine is first activated by ATP to form Tyr-AMP and then transferred to the acceptor end of tRNA(Tyr). This chain is Tyrosine--tRNA ligase, found in Caulobacter sp. (strain K31).